Reading from the N-terminus, the 199-residue chain is MEAFDTHTGIGVPLRRSNVDTDQIIPAVYLKRVTRTGFEDGLFAGWRTDPSFILNLEPFNRGTVLVAGPEFGTGSSREHAVWALMDYGFRVVLSSRFGDIFRGNAGKAGLVAGLVGQSDIELLWKLIEQNPGLELTVNLEDRTVTAGTAVVPFEIDDYTRWRLLEGLDDIGLTLRKVDEIAAFEAARPEFKPRTLEPSE.

It belongs to the LeuD family. LeuD type 1 subfamily. Heterodimer of LeuC and LeuD.

It carries out the reaction (2R,3S)-3-isopropylmalate = (2S)-2-isopropylmalate. Its pathway is amino-acid biosynthesis; L-leucine biosynthesis; L-leucine from 3-methyl-2-oxobutanoate: step 2/4. Its function is as follows. Catalyzes the isomerization between 2-isopropylmalate and 3-isopropylmalate, via the formation of 2-isopropylmaleate. This Mycobacteroides abscessus (strain ATCC 19977 / DSM 44196 / CCUG 20993 / CIP 104536 / JCM 13569 / NCTC 13031 / TMC 1543 / L948) (Mycobacterium abscessus) protein is 3-isopropylmalate dehydratase small subunit.